The primary structure comprises 787 residues: ER degradation-enhancing alpha-mannosidase-like protein 1 (787 aa).

A signal peptide spans 1–22; that stretch reads MGSLHSIFCVCLILLCIFKENS. 5 N-linked (GlcNAc...) asparagine glycosylation sites follow: asparagine 479, asparagine 609, asparagine 670, asparagine 693, and asparagine 756.

Belongs to the glycosyl hydrolase 47 family.

It localises to the endoplasmic reticulum lumen. Alpha-mannosidase-like protein involved in endoplasmic reticulum-associated degradation (ERAD). Delivers misfolded glycoproteins to proteasomes. It lacks mannosidase activity. The polypeptide is ER degradation-enhancing alpha-mannosidase-like protein 1 (mnl1) (Schizosaccharomyces pombe (strain 972 / ATCC 24843) (Fission yeast)).